The following is a 1781-amino-acid chain: BCL-6 corepressor-like protein 1 (1781 aa).

Disordered stretches follow at residues 64–136 (AVGS…SHSR) and 337–362 (ASTPPAAPAPPSVPMPTPTPSSGPPS). 2 stretches are compositionally biased toward polar residues: residues 66–82 (GSGSNARGTNPDGNTTE) and 127–136 (PDSTEASHSR). At S490 the chain carries Phosphoserine. Residues 521–531 (SCTSPSSSTNS) show a composition bias toward low complexity. Disordered regions lie at residues 521-545 (SCTSPSSSTNSQPAPDGVPGPLADT), 561-616 (LLPA…EMPL), 733-777 (NRDP…STVK), 869-895 (PLGSSETVHGLPEGQPRPGGPFAPEQD), and 933-960 (QPSSGDMGVNQGSEESESHLCSDSTPKM). A compositionally biased stretch (polar residues) spans 581–594 (TDQQTEGTSVTFSP). A phosphoserine mark is found at S593 and S607. A Glycyl lysine isopeptide (Lys-Gly) (interchain with G-Cter in SUMO2) cross-link involves residue K741. Position 1024 is a phosphoserine (S1024). Residue K1087 forms a Glycyl lysine isopeptide (Lys-Gly) (interchain with G-Cter in SUMO2) linkage. Residues 1100 to 1484 (WQPDEETESL…PTARQIPPEA (385 aa)) are disordered. Over residues 1116–1127 (CNKEKEIEEEPR) the composition is skewed to basic and acidic residues. At S1162 the chain carries Phosphoserine. Over residues 1176–1185 (VRGKHKHRKP) the composition is skewed to basic residues. Over residues 1195–1213 (KRTDGHEEGSLEKKAKNSF) the composition is skewed to basic and acidic residues. Residues 1222–1234 (STRTRSQSGSICS) are compositionally biased toward polar residues. Basic and acidic residues-rich tracts occupy residues 1271–1284 (TQRDTQYRSHHAQD) and 1297–1307 (RAREMPWRTEA). Positions 1314-1324 (TNEEEEDDEEE) are enriched in acidic residues. The span at 1328-1339 (KRKKRRRQKSRK) shows a compositional bias: basic residues. Residues 1350–1362 (EEQRRKGRADSKA) are compositionally biased toward basic and acidic residues. 2 stretches are compositionally biased toward polar residues: residues 1381–1394 (LLLSSKAQGISDSP) and 1437–1449 (RWSQQKTRSSKSP). 3 ANK repeats span residues 1493–1523 (AGETLLQRAARLGYKDVVLYCLQKHSEDVNH), 1527–1556 (AGYTALHEACSRGWTDILNILLQHGANVNC), and 1560–1589 (DGTRPVHDAVVNDNLETIWLLLSYGADPTL). Positions 1664-1781 (DDFMFELSDK…SEVEYQSWSS (118 aa)) are PCGF Ub-like fold domain (PUFD); required for the interaction with the KDM2B-SKP1 heterodimeric complex.

It belongs to the BCOR family. As to quaternary structure, interacts with PCGF1, forming heterodimers. The PCGF1-BCORL1 heterodimeric complex interacts with the KDM2B-SKP1 heterodimeric complex to form a homotetrameric polycomb repression complex 1 (PRC1.1). Interacts with SKP1. Interacts with CTBP1, HDAC4, HDAC5 and HDAC7. As to expression, highly expressed in lung and testis.

It localises to the nucleus. Functionally, transcriptional corepressor. May specifically inhibit gene expression when recruited to promoter regions by sequence specific DNA-binding proteins such as BCL6. This repression may be mediated at least in part by histone deacetylase activities which can associate with this corepressor. The protein is BCL-6 corepressor-like protein 1 (Bcorl1) of Mus musculus (Mouse).